We begin with the raw amino-acid sequence, 431 residues long: Histidinol dehydrogenase (431 aa).

Residues Tyr127, Gln185, and Asn208 each contribute to the NAD(+) site. Residues Ser234, Gln256, and His259 each coordinate substrate. Zn(2+) is bound by residues Gln256 and His259. Residues Glu323 and His324 each act as proton acceptor in the active site. The substrate site is built by His324, Asp357, Glu411, and His416. Asp357 is a binding site for Zn(2+). His416 is a binding site for Zn(2+).

Belongs to the histidinol dehydrogenase family. Zn(2+) is required as a cofactor.

The enzyme catalyses L-histidinol + 2 NAD(+) + H2O = L-histidine + 2 NADH + 3 H(+). Its pathway is amino-acid biosynthesis; L-histidine biosynthesis; L-histidine from 5-phospho-alpha-D-ribose 1-diphosphate: step 9/9. Its function is as follows. Catalyzes the sequential NAD-dependent oxidations of L-histidinol to L-histidinaldehyde and then to L-histidine. In Vibrio parahaemolyticus serotype O3:K6 (strain RIMD 2210633), this protein is Histidinol dehydrogenase.